A 491-amino-acid chain; its full sequence is G2/mitotic-specific cyclin-A (491 aa).

The tract at residues 1-21 is disordered; that stretch reads MASFQIHQDMSNKENPGIKIP. The Cyclin N-terminal domain occupies 206–332; sequence DILEYFRESE…ILKILSFDLC (127 aa).

It belongs to the cyclin family. Cyclin AB subfamily. Component of the Frs-CycA-Cdk1 complex composed of CycA, Cdk1 and Z600. Interacts (via C-terminus) with Z600. Interacts with otu and (via C-terminus) with bam; the interaction stabilizes CycA by negatively regulating its ubiquitination. Post-translationally, ubiquitinated. Ubiquitination state is negatively regulated by a deubiquitinase complex made up of bam and otu.

Functionally, essential for the control of the cell cycle at the G2/M (mitosis) transition. Interacts with the Cdk1 and Cdk2 protein kinases to form MPF. G2/M cyclins accumulate steadily during G2 and are abruptly destroyed at mitosis. The polypeptide is G2/mitotic-specific cyclin-A (CycA) (Drosophila melanogaster (Fruit fly)).